Reading from the N-terminus, the 280-residue chain is Probable inactive shikimate kinase like 1, chloroplastic (280 aa).

The N-terminal 54 residues, 1–54 (MEIFSASASLTLTGFVPRLLPLLSPQARTTLCKPLLSSSSTRLISCHSRIAPSR), are a transit peptide targeting the chloroplast.

This sequence belongs to the shikimate kinase family.

It localises to the plastid. Its subcellular location is the chloroplast. Required for chloroplast biogenesis. This is Probable inactive shikimate kinase like 1, chloroplastic (SKL1) from Arabidopsis thaliana (Mouse-ear cress).